We begin with the raw amino-acid sequence, 181 residues long: Regulator of G-protein signaling 5 (181 aa).

One can recognise an RGS domain in the interval 64–180 (SLDKLLQNNY…VRSEFYQEFI (117 aa)).

The protein resides in the cytoplasm. It is found in the membrane. Inhibits signal transduction by increasing the GTPase activity of G protein alpha subunits thereby driving them into their inactive GDP-bound form. Binds to G(i)-alpha and G(o)-alpha, but not to G(s)-alpha. The polypeptide is Regulator of G-protein signaling 5 (RGS5) (Bos taurus (Bovine)).